Consider the following 299-residue polypeptide: Phosphoribosylaminoimidazole-succinocarboxamide synthase (299 aa).

The protein belongs to the SAICAR synthetase family.

The enzyme catalyses 5-amino-1-(5-phospho-D-ribosyl)imidazole-4-carboxylate + L-aspartate + ATP = (2S)-2-[5-amino-1-(5-phospho-beta-D-ribosyl)imidazole-4-carboxamido]succinate + ADP + phosphate + 2 H(+). It participates in purine metabolism; IMP biosynthesis via de novo pathway; 5-amino-1-(5-phospho-D-ribosyl)imidazole-4-carboxamide from 5-amino-1-(5-phospho-D-ribosyl)imidazole-4-carboxylate: step 1/2. This chain is Phosphoribosylaminoimidazole-succinocarboxamide synthase, found in Desulfatibacillum aliphaticivorans.